Reading from the N-terminus, the 219-residue chain is Ribosomal RNA small subunit methyltransferase I (219 aa).

Belongs to the methyltransferase superfamily. RsmI family.

It localises to the cytoplasm. The enzyme catalyses cytidine(1402) in 16S rRNA + S-adenosyl-L-methionine = 2'-O-methylcytidine(1402) in 16S rRNA + S-adenosyl-L-homocysteine + H(+). In terms of biological role, catalyzes the 2'-O-methylation of the ribose of cytidine 1402 (C1402) in 16S rRNA. The polypeptide is Ribosomal RNA small subunit methyltransferase I (Coprothermobacter proteolyticus (strain ATCC 35245 / DSM 5265 / OCM 4 / BT)).